The chain runs to 191 residues: Small ribosomal subunit protein uS5 (191 aa).

Positions 21–84 (LVDKLVTINR…ERAKRTMIRV (64 aa)) constitute an S5 DRBM domain. Positions 161 to 191 (PRHVASRRGKKAAELFGKREQGQTEAEVTNG) are disordered. The span at 171-182 (KAAELFGKREQG) shows a compositional bias: basic and acidic residues.

This sequence belongs to the universal ribosomal protein uS5 family. As to quaternary structure, part of the 30S ribosomal subunit. Contacts proteins S4 and S8.

Its function is as follows. With S4 and S12 plays an important role in translational accuracy. Functionally, located at the back of the 30S subunit body where it stabilizes the conformation of the head with respect to the body. This is Small ribosomal subunit protein uS5 from Gluconobacter oxydans (strain 621H) (Gluconobacter suboxydans).